The chain runs to 153 residues: uncharacterized protein (153 aa).

Helical transmembrane passes span 17 to 37 (ITLIGYWIASILAIIIYSMFF), 44 to 64 (FLLCLLLPTPIIWFNILIGMG), and 118 to 138 (FVFIVGLVLIVGFTIITTLII).

The protein to M.jannaschii MJ0129 and MJ0554.

The protein resides in the cell membrane. This is an uncharacterized protein from Methanocaldococcus jannaschii (strain ATCC 43067 / DSM 2661 / JAL-1 / JCM 10045 / NBRC 100440) (Methanococcus jannaschii).